The following is a 224-amino-acid chain: 7-cyano-7-deazaguanine synthase (224 aa).

Position 11-21 (11-21 (FSGGQDSTTCL)) interacts with ATP. 4 residues coordinate Zn(2+): Cys190, Cys199, Cys202, and Cys205.

It belongs to the QueC family. Zn(2+) serves as cofactor.

The enzyme catalyses 7-carboxy-7-deazaguanine + NH4(+) + ATP = 7-cyano-7-deazaguanine + ADP + phosphate + H2O + H(+). It functions in the pathway purine metabolism; 7-cyano-7-deazaguanine biosynthesis. In terms of biological role, catalyzes the ATP-dependent conversion of 7-carboxy-7-deazaguanine (CDG) to 7-cyano-7-deazaguanine (preQ(0)). The chain is 7-cyano-7-deazaguanine synthase from Parabacteroides distasonis (strain ATCC 8503 / DSM 20701 / CIP 104284 / JCM 5825 / NCTC 11152).